A 950-amino-acid chain; its full sequence is Glycine dehydrogenase (decarboxylating) (950 aa).

K699 is modified (N6-(pyridoxal phosphate)lysine).

Belongs to the GcvP family. In terms of assembly, the glycine cleavage system is composed of four proteins: P, T, L and H. It depends on pyridoxal 5'-phosphate as a cofactor.

It catalyses the reaction N(6)-[(R)-lipoyl]-L-lysyl-[glycine-cleavage complex H protein] + glycine + H(+) = N(6)-[(R)-S(8)-aminomethyldihydrolipoyl]-L-lysyl-[glycine-cleavage complex H protein] + CO2. In terms of biological role, the glycine cleavage system catalyzes the degradation of glycine. The P protein binds the alpha-amino group of glycine through its pyridoxal phosphate cofactor; CO(2) is released and the remaining methylamine moiety is then transferred to the lipoamide cofactor of the H protein. In Chromobacterium violaceum (strain ATCC 12472 / DSM 30191 / JCM 1249 / CCUG 213 / NBRC 12614 / NCIMB 9131 / NCTC 9757 / MK), this protein is Glycine dehydrogenase (decarboxylating).